A 64-amino-acid polypeptide reads, in one-letter code: Translation machinery-associated protein 7 homolog (64 aa).

The tract at residues 1–64 (MSGRQGGKAK…GGGIKKSGKK (64 aa)) is disordered. The stretch at 21–50 (DLSEEDVEFKKKQQEEAKKIKEMAAKAGQR) forms a coiled coil. Over residues 28–44 (EFKKKQQEEAKKIKEMA) the composition is skewed to basic and acidic residues. Positions 53 to 64 (LLGGGIKKSGKK) are enriched in gly residues.

Belongs to the TMA7 family.

The sequence is that of Translation machinery-associated protein 7 homolog from Caenorhabditis elegans.